The following is a 446-amino-acid chain: Argininosuccinate lyase (446 aa).

Belongs to the lyase 1 family. Argininosuccinate lyase subfamily.

It localises to the cytoplasm. It catalyses the reaction 2-(N(omega)-L-arginino)succinate = fumarate + L-arginine. It participates in amino-acid biosynthesis; L-arginine biosynthesis; L-arginine from L-ornithine and carbamoyl phosphate: step 3/3. The chain is Argininosuccinate lyase from Parabacteroides distasonis (strain ATCC 8503 / DSM 20701 / CIP 104284 / JCM 5825 / NCTC 11152).